Here is a 499-residue protein sequence, read N- to C-terminus: Rhamnogalacturonate lyase A (499 aa).

Positions 1 to 20 are cleaved as a signal peptide; that stretch reads MLSKTSLLSLLSLAAGVVNA. 2 disulfides stabilise this stretch: C49/C92 and C183/C192.

The protein belongs to the polysaccharide lyase 4 family.

Its subcellular location is the secreted. The enzyme catalyses Endotype eliminative cleavage of L-alpha-rhamnopyranosyl-(1-&gt;4)-alpha-D-galactopyranosyluronic acid bonds of rhamnogalacturonan I domains in ramified hairy regions of pectin leaving L-rhamnopyranose at the reducing end and 4-deoxy-4,5-unsaturated D-galactopyranosyluronic acid at the non-reducing end.. Functionally, pectinolytic enzymes consist of four classes of enzymes: pectin lyase, polygalacturonase, pectin methylesterase and rhamnogalacturonase. Degrades the rhamnogalacturonan I (RG-I) backbone of pectin. This is Rhamnogalacturonate lyase A (rglA) from Aspergillus niger.